Here is a 205-residue protein sequence, read N- to C-terminus: LexA repressor (205 aa).

Residues 29-49 (IRDICKATGLRSSSTVYNYLN) constitute a DNA-binding region (H-T-H motif). Catalysis depends on for autocatalytic cleavage activity residues S128 and K165.

Belongs to the peptidase S24 family. As to quaternary structure, homodimer.

It catalyses the reaction Hydrolysis of Ala-|-Gly bond in repressor LexA.. In terms of biological role, represses a number of genes involved in the response to DNA damage (SOS response), including recA and lexA. In the presence of single-stranded DNA, RecA interacts with LexA causing an autocatalytic cleavage which disrupts the DNA-binding part of LexA, leading to derepression of the SOS regulon and eventually DNA repair. The chain is LexA repressor from Moorella thermoacetica (strain ATCC 39073 / JCM 9320).